The chain runs to 282 residues: Release factor glutamine methyltransferase (282 aa).

S-adenosyl-L-methionine-binding positions include 120–124 (GVGSG), D143, and N189. 189 to 192 (NPPY) contacts substrate.

Belongs to the protein N5-glutamine methyltransferase family. PrmC subfamily.

The enzyme catalyses L-glutaminyl-[peptide chain release factor] + S-adenosyl-L-methionine = N(5)-methyl-L-glutaminyl-[peptide chain release factor] + S-adenosyl-L-homocysteine + H(+). Functionally, methylates the class 1 translation termination release factors RF1/PrfA and RF2/PrfB on the glutamine residue of the universally conserved GGQ motif. This chain is Release factor glutamine methyltransferase, found in Dictyoglomus turgidum (strain DSM 6724 / Z-1310).